Here is a 441-residue protein sequence, read N- to C-terminus: Ribulose bisphosphate carboxylase large chain (441 aa).

Substrate is bound by residues N89 and T139. K141 functions as the Proton acceptor in the catalytic mechanism. K143 contributes to the substrate binding site. The Mg(2+) site is built by K167, D169, and E170. K167 is modified (N6-carboxylysine). H260 acts as the Proton acceptor in catalysis. R261, H293, and S345 together coordinate substrate.

This sequence belongs to the RuBisCO large chain family. Type I subfamily. Heterohexadecamer of 8 large chains and 8 small chains; disulfide-linked. The disulfide link is formed within the large subunit homodimers. Mg(2+) is required as a cofactor. In terms of processing, the disulfide bond which can form in the large chain dimeric partners within the hexadecamer appears to be associated with oxidative stress and protein turnover.

Its subcellular location is the plastid. The protein resides in the chloroplast. It carries out the reaction 2 (2R)-3-phosphoglycerate + 2 H(+) = D-ribulose 1,5-bisphosphate + CO2 + H2O. The catalysed reaction is D-ribulose 1,5-bisphosphate + O2 = 2-phosphoglycolate + (2R)-3-phosphoglycerate + 2 H(+). Its function is as follows. RuBisCO catalyzes two reactions: the carboxylation of D-ribulose 1,5-bisphosphate, the primary event in carbon dioxide fixation, as well as the oxidative fragmentation of the pentose substrate in the photorespiration process. Both reactions occur simultaneously and in competition at the same active site. The chain is Ribulose bisphosphate carboxylase large chain from Symphoricarpos albus (Common snowberry).